The sequence spans 147 residues: Large ribosomal subunit protein uL15 (147 aa).

The tract at residues 1–57 is disordered; it reads MDLSNLSPAPGSTKARKRLGRGPGSGNGTTAGRGNKGHNSRSGGGVRPGFEGGQMPL. Gly residues-rich tracts occupy residues 21–31 and 42–52; these read RGPGSGNGTTA and SGGGVRPGFEG.

This sequence belongs to the universal ribosomal protein uL15 family. In terms of assembly, part of the 50S ribosomal subunit.

Its function is as follows. Binds to the 23S rRNA. This Desulfosudis oleivorans (strain DSM 6200 / JCM 39069 / Hxd3) (Desulfococcus oleovorans) protein is Large ribosomal subunit protein uL15.